The primary structure comprises 219 residues: MTAHDRGFDGVERRGLMFVLSSPSGAGKTTLSRLLIERVEGLSLSVSATTRPMRPGEVDGRDYAFVDEKTFAAMVERNDLLEWAHVFDNHYGTPRAPVDAALSSGRDVLFDIDWQGTQQLREKARDDVVSVFILPPSAADLERRLHTRAQDSDDVIRERMARAAHEVSHWAEYDYIVINRDIDEAFAEVQSILKAERLKRERRTGLTAFVRELQRQLET.

Positions 15-194 (GLMFVLSSPS…AFAEVQSILK (180 aa)) constitute a Guanylate kinase-like domain. 22-29 (SPSGAGKT) is an ATP binding site.

Belongs to the guanylate kinase family.

It localises to the cytoplasm. The enzyme catalyses GMP + ATP = GDP + ADP. Essential for recycling GMP and indirectly, cGMP. The sequence is that of Guanylate kinase from Nitrobacter winogradskyi (strain ATCC 25391 / DSM 10237 / CIP 104748 / NCIMB 11846 / Nb-255).